Here is a 263-residue protein sequence, read N- to C-terminus: Outer membrane protein OmpK (263 aa).

The first 20 residues, 1-20 (MRKSLLALSLLAATSAPVLA), serve as a signal peptide directing secretion.

Belongs to the nucleoside-specific channel-forming outer membrane porin (Tsx) (TC 1.B.10) family.

Its subcellular location is the cell outer membrane. Its function is as follows. Serves as receptor for a broad-host-range vibriophage, KVP40. This Vibrio parahaemolyticus protein is Outer membrane protein OmpK.